Reading from the N-terminus, the 86-residue chain is Molybdopterin synthase sulfur carrier subunit (86 aa).

Residue glycine 86 is modified to 1-thioglycine; alternate. Residue glycine 86 is modified to Glycyl adenylate; alternate.

Belongs to the MoaD family. MOCS2A subfamily. Heterotetramer; composed of 2 small (mocs2s) and 2 large (mocs2l) subunits. C-terminal thiocarboxylation occurs in 2 steps, it is first acyl-adenylated (-COAMP) via the hesA/moeB/thiF part of mocs3, then thiocarboxylated (-COSH) via the rhodanese domain of mocs3.

The protein localises to the cytoplasm. It functions in the pathway cofactor biosynthesis; molybdopterin biosynthesis. Acts as a sulfur carrier required for molybdopterin biosynthesis. Component of the molybdopterin synthase complex that catalyzes the conversion of precursor Z into molybdopterin by mediating the incorporation of 2 sulfur atoms into precursor Z to generate a dithiolene group. In the complex, serves as sulfur donor by being thiocarboxylated (-COSH) at its C-terminus by mocs3. After interaction with mocs2l, the sulfur is then transferred to precursor Z to form molybdopterin. In Dictyostelium discoideum (Social amoeba), this protein is Molybdopterin synthase sulfur carrier subunit (mocs2s).